We begin with the raw amino-acid sequence, 87 residues long: MSERNQRKVYQGRVVSDKMDKTITVVVETYKKHSLYGKRVKYSKKFKAHDENNQAKIGDIVKIMETRPLSATKRFRLVEVVEEAVII.

This sequence belongs to the universal ribosomal protein uS17 family. Part of the 30S ribosomal subunit.

Its function is as follows. One of the primary rRNA binding proteins, it binds specifically to the 5'-end of 16S ribosomal RNA. In Bacillus licheniformis (strain ATCC 14580 / DSM 13 / JCM 2505 / CCUG 7422 / NBRC 12200 / NCIMB 9375 / NCTC 10341 / NRRL NRS-1264 / Gibson 46), this protein is Small ribosomal subunit protein uS17.